Consider the following 225-residue polypeptide: MSDQGRLSLPRGEGGTDEPNPRHLCSYSKLEFHLPLPESMASVFACWGCGEYHVCDGSSECTLIETHEGVVCALTGNYMGPHFQPALRPWTEIRQDTQDQRDKWEPEQVQGLVKTVVNHLYHYFLNENVISGVSEALFDQEGALRPHIPALVSFVFPCCLMLFRGASSEKVVDVVLSLYIHVIISIYSQKTVYGALLFKSTRNKRYDAVAKRMRELWMSTLTTKC.

The segment at 1 to 20 is disordered; that stretch reads MSDQGRLSLPRGEGGTDEPN.

Belongs to the herpesviridae UL92 family.

Its function is as follows. Part of the viral pre-initiation complex (vPIC) that is responsible for the expression of vPIC-dependent late genes. vPIC is composed of at least BcRF1 that binds the viral TATT box, BDLF3.5, BDLF4, BFRF2, BGLF3, BGLF4 and BVLF1. This chain is Late gene expression regulator BDLF4, found in Homo sapiens (Human).